The primary structure comprises 478 residues: Transcript termination protein A18 (478 aa).

In terms of domain architecture, Helicase ATP-binding spans 98-254 (KLSTHRPMYM…NDVVNVLKVS (157 aa)). 111-118 (LSCGFGKT) lines the ATP pocket. The short motif at 204 to 207 (DESH) is the DESH box element. Residues 302–454 (PRNNLIVDTV…IVSVSTDKLG (153 aa)) enclose the Helicase C-terminal domain. A disordered region spans residues 456-478 (QQEGKEGTKEEPALTKAFSSQIR). Over residues 458 to 468 (EGKEGTKEEPA) the composition is skewed to basic and acidic residues.

It belongs to the helicase family. Poxviruses subfamily. As to quaternary structure, interacts with G2. Might be part of a transcription complex composed at least of G2, A18, and H5.

The protein resides in the virion. Functionally, DNA helicase which seems to act as a postreplicative transcription termination factor. Involved in ATP-dependent release of nascent RNA. Forms a stable complex with single-stranded DNA, and to a lesser extent RNA. This Oryctolagus cuniculus (Rabbit) protein is Transcript termination protein A18.